The following is a 197-amino-acid chain: Viral polyamine acetyltransferase (197 aa).

Residue N22 coordinates acetyl-CoA. The active site involves E27. One can recognise an N-acetyltransferase domain in the interval S102–D182. Positions 115, 117, 121, 123, 125, 126, 149, 150, and 159 each coordinate acetyl-CoA.

It belongs to the acetyltransferase family.

It catalyses the reaction spermine + acetyl-CoA = N(1)-acetylspermine + CoA + H(+). It carries out the reaction spermidine + acetyl-CoA = N(1)-acetylspermidine + CoA + H(+). The enzyme catalyses spermidine + acetyl-CoA = N(8)-acetylspermidine + CoA + H(+). The catalysed reaction is putrescine + acetyl-CoA = N-acetylputrescine + CoA + H(+). It catalyses the reaction cadaverine + acetyl-CoA = N-acetylcadaverine + CoA + H(+). It carries out the reaction sym-homospermidine + acetyl-CoA = N(1)-acetyl-sym-homospermidine + CoA + H(+). Acetylates polyamines such as spermine, spermidine, cadaverine, homospermidine and putrescine (the latter with low efficiency). May play a role in the regulation of polyamine catabolism in the host during viral replication. This Chlorella (PBCV-1) protein is Viral polyamine acetyltransferase.